Consider the following 401-residue polypeptide: Pleckstrin homology-like domain family A member 1 (401 aa).

Disordered stretches follow at residues 39 to 67, 190 to 222, and 293 to 401; these read IQKRREGARPVPFSERSQEDGRGPAARSS, QQQQQQQQQQQQQQQPGQGPAEPSQPSGPAVAS, and KSTR…SNSA. The PH domain maps to 151 to 283; sequence LKEGVLEKRS…AEITLQMVQY (133 aa). The segment covering 190 to 204 has biased composition (low complexity); that stretch reads QQQQQQQQQQQQQQQ. Positions 308–344 are enriched in pro residues; sequence PSQPQPQPQLQPQPQPQPQPQPQPQSQPQPQPQPKPQ. The tract at residues 311-346 is 15 X 2 AA repeats of P-Q; it reads PQPQPQLQPQPQPQPQPQPQPQSQPQPQPQPKPQPQ. The span at 352-378 shows a compositional bias: basic residues; that stretch reads PHPHPHPHSHPHSHPHPHPHPHPHQIP. A 14 X 2 AA repeats of P-H region spans residues 352 to 389; the sequence is PHPHPHPHSHPHSHPHPHPHPHPHQIPHPHPQPHSQPH.

In terms of assembly, interacts with RPL14, EIF3S7 and PABPC4. Widely expressed with highest levels in pancreas. Strongly expressed by benign melanocytic nevi, and progressively reduced expressed in primary and metastatic melanomas (at protein level).

The protein resides in the cytoplasm. It localises to the cytoplasmic vesicle. It is found in the nucleus. The protein localises to the nucleolus. Functionally, seems to be involved in regulation of apoptosis. May be involved in detachment-mediated programmed cell death. May mediate apoptosis during neuronal development. May be involved in regulation of anti-apoptotic effects of IGF1. May be involved in translational regulation. This is Pleckstrin homology-like domain family A member 1 (PHLDA1) from Homo sapiens (Human).